The primary structure comprises 358 residues: CX3C chemokine receptor 1 (358 aa).

At Met1 to Asp26 the chain is on the extracellular side. The helical transmembrane segment at Ile27 to Leu47 threads the bilayer. The Cytoplasmic segment spans residues Val48–Asp68. A helical transmembrane segment spans residues Ile69–Thr89. The Extracellular segment spans residues His90 to Leu105. Residues Cys103 and Cys176 are joined by a disulfide bond. Residues Ile106 to Val126 form a helical membrane-spanning segment. The Cytoplasmic portion of the chain corresponds to Asp127–Gly147. A helical transmembrane segment spans residues Val148–Phe168. Over Thr169–Glu186 the chain is Extracellular. Residues Ile187–Ile207 traverse the membrane as a helical segment. The Cytoplasmic segment spans residues Met208–Arg232. A helical membrane pass occupies residues Leu233–Phe253. Residues Leu254–Ala275 lie on the Extracellular side of the membrane. The chain crosses the membrane as a helical span at residues Ile276 to Phe296. The Cytoplasmic portion of the chain corresponds to Ala297–Leu358. Phosphothreonine is present on Thr349.

This sequence belongs to the G-protein coupled receptor 1 family. Found in a ternary complex with CX3CL1 and ITGAV:ITGB3 or ITGA4:ITGB1. Post-translationally, this protein is not N-glycosylated which is unusual for G-protein-coupled receptors.

The protein resides in the cell membrane. Receptor for the C-X3-C chemokine fractalkine (CX3CL1) present on many early leukocyte cells; CX3CR1-CX3CL1 signaling exerts distinct functions in different tissue compartments, such as immune response, inflammation, cell adhesion and chemotaxis. CX3CR1-CX3CL1 signaling mediates cell migratory functions. Responsible for the recruitment of natural killer (NK) cells to inflamed tissues. Acts as a regulator of inflammation process leading to atherogenesis by mediating macrophage and monocyte recruitment to inflamed atherosclerotic plaques, promoting cell survival. Involved in airway inflammation by promoting interleukin 2-producing T helper (Th2) cell survival in inflamed lung. Involved in the migration of circulating monocytes to non-inflamed tissues, where they differentiate into macrophages and dendritic cells. Acts as a negative regulator of angiogenesis, probably by promoting macrophage chemotaxis. Plays a key role in brain microglia by regulating inflammatory response in the central nervous system (CNS) and regulating synapse maturation. Required to restrain the microglial inflammatory response in the CNS and the resulting parenchymal damage in response to pathological stimuli. Involved in brain development by participating in synaptic pruning, a natural process during which brain microglia eliminates extra synapses during postnatal development. Synaptic pruning by microglia is required to promote the maturation of circuit connectivity during brain development. Acts as an important regulator of the gut microbiota by controlling immunity to intestinal bacteria and fungi. Expressed in lamina propria dendritic cells in the small intestine, which form transepithelial dendrites capable of taking up bacteria in order to provide defense against pathogenic bacteria. Required to initiate innate and adaptive immune responses against dissemination of commensal fungi (mycobiota) component of the gut: expressed in mononuclear phagocytes (MNPs) and acts by promoting induction of antifungal IgG antibodies response to confer protection against disseminated C.albicans or C.auris infection. Also acts as a receptor for C-C motif chemokine CCL26, inducing cell chemotaxis. This chain is CX3C chemokine receptor 1, found in Bos taurus (Bovine).